The sequence spans 1801 residues: Sperm flagellar protein 2 (1801 aa).

Positions 1–105 constitute a Calponin-homology (CH) domain; that stretch reads MSEILCQWLN…LLYQLYIALQ (105 aa). Coiled coils occupy residues 176–260 and 321–395; these read EKFE…KDLQ and AHEA…TKQA. The interval 632-659 is disordered; sequence QDKNELTDTQVPGEAAPQKEGTKSSDFE. Coiled coils occupy residues 722 to 748 and 869 to 895; these read NQAK…KAQM and ATEV…SAVS. Basic and acidic residues-rich tracts occupy residues 883-892 and 909-918; these read LEEKETEKKS and EAEKEKEVHQ. The tract at residues 883–949 is disordered; that stretch reads LEEKETEKKS…KISVKKSPID (67 aa). The stretch at 1051 to 1077 forms a coiled coil; sequence EDLWEDEETKAELHQRVNDLRDRLWDI. Composition is skewed to basic and acidic residues over residues 1233 to 1250 and 1261 to 1295; these read RLAE…KEKS and KEKE…AEKK. Disordered regions lie at residues 1233-1304, 1651-1695, and 1781-1801; these read RLAE…SPVV, KTSI…NANT, and SEHA…DEKK. The stretch at 1252–1286 forms a coiled coil; it reads QSGTNKKAKKEKEQAKKEKEQAKKEKEQAKKEKEP. Residues 1305–1657 form an interaction with IFT20 region; it reads EVSPVTITPE…TAEKTSISSV (353 aa). Residues 1665–1695 adopt a coiled-coil conformation; the sequence is EAEENSTREELKEEKDERDQKEEEIPENANT. Residues 1669–1687 are compositionally biased toward basic and acidic residues; that stretch reads NSTREELKEEKDERDQKEE.

Interacts (via C-terminus) with IFT20. Interacts with DYNC1I2. In terms of tissue distribution, predominantly expressed in ciliated tissues such as lung, trachea, testis, brain, and at lower levels in kidney and spleen.

It is found in the cell projection. The protein localises to the cilium. It localises to the flagellum. Its subcellular location is the cytoplasm. The protein resides in the golgi apparatus. In terms of biological role, required for correct axoneme development in spermatozoa. Important for normal development of the manchette and sperm head morphology. Essential for male fertility. Plays a role in localization of the intraflagellar transport protein IFT20 to the manchette, suggesting function as an adapter for dynein-mediated protein transport during spermatogenesis. Also plays a role in bone growth where it seems to be required for normal osteoblast differentiation. The protein is Sperm flagellar protein 2 (Spef2) of Rattus norvegicus (Rat).